Here is a 313-residue protein sequence, read N- to C-terminus: tRNA dimethylallyltransferase (313 aa).

An ATP-binding site is contributed by 10-17; it reads GPTAVGKS. Residue 12 to 17 participates in substrate binding; the sequence is TAVGKS. The tract at residues 35–38 is interaction with substrate tRNA; that stretch reads DSTQ.

This sequence belongs to the IPP transferase family. Monomer. Mg(2+) serves as cofactor.

It carries out the reaction adenosine(37) in tRNA + dimethylallyl diphosphate = N(6)-dimethylallyladenosine(37) in tRNA + diphosphate. Functionally, catalyzes the transfer of a dimethylallyl group onto the adenine at position 37 in tRNAs that read codons beginning with uridine, leading to the formation of N6-(dimethylallyl)adenosine (i(6)A). The sequence is that of tRNA dimethylallyltransferase from Oceanobacillus iheyensis (strain DSM 14371 / CIP 107618 / JCM 11309 / KCTC 3954 / HTE831).